The following is a 588-amino-acid chain: MSKRTTYCGLVTEAFLGQEITLKGWVNNRRDLGGLIFVDLRDREGIVQVVFNPAFSEEALKIAETVRSEYVVEVQGTVTKRDPETVNPKIKTGQVEVQVTNIKVINKSETPPFSINEENVNVDENIRLKYRYLDLRRQELAQTFKMRHQITRSIRQYLDDEGFFDIETPVLTKSTPEGARDYLVPSRVHDGEFYALPQSPQLFKQLLMISGFDKYYQIVKCFRDEDLRADRQPEFTQVDIEMSFVDQEDVMQMGEEMLKKVVKEVKGVEINGAFPRMTYKEAMRRYGSDKPDTRFEMELIDVSQLGRDMDFKVFKDTVENDGEIKAIVAKGAAEQYTRKDMDALTEFVNIYGAKGLAWVKVVEDGLTGPIGRFFETENVETLLTLTGAEAGDLVMFVADKPNVVAQSLGALRVKLAKELGLIDETKLNFLWVTDWPLLEYDEDAKRYVAAHHPFTSPKEADIAKLGTAPEEAEANAYDIVLNGYELGGGSIRIHDGELQEKMFEVLGFTKEQAQEQFGFLLDAFKYGAPPHGGIALGLDRLVMLLTNRTNLRDTIAFPKTASATCLLTNAPGEVSDKQLEELSLRIRH.

Residue Glu-177 coordinates L-aspartate. The tract at residues 201–204 is aspartate; that stretch reads QLFK. Arg-223 is an L-aspartate binding site. ATP contacts are provided by residues 223–225 and Gln-232; that span reads RDE. His-451 contributes to the L-aspartate binding site. ATP is bound at residue Glu-485. Arg-492 is an L-aspartate binding site. 537–540 serves as a coordination point for ATP; it reads GLDR.

Belongs to the class-II aminoacyl-tRNA synthetase family. Type 1 subfamily. As to quaternary structure, homodimer.

The protein resides in the cytoplasm. It carries out the reaction tRNA(Asp) + L-aspartate + ATP = L-aspartyl-tRNA(Asp) + AMP + diphosphate. Catalyzes the attachment of L-aspartate to tRNA(Asp) in a two-step reaction: L-aspartate is first activated by ATP to form Asp-AMP and then transferred to the acceptor end of tRNA(Asp). The sequence is that of Aspartate--tRNA ligase from Staphylococcus aureus (strain Newman).